The chain runs to 680 residues: uncharacterized protein (680 aa).

It belongs to the HyuA family.

This is an uncharacterized protein from Methanocaldococcus jannaschii (strain ATCC 43067 / DSM 2661 / JAL-1 / JCM 10045 / NBRC 100440) (Methanococcus jannaschii).